Consider the following 220-residue polypeptide: Small ribosomal subunit protein mS42 (220 aa).

Belongs to the mitochondrion-specific ribosomal protein mS42 family. In terms of assembly, component of the mitochondrial small ribosomal subunit (mt-SSU). Mature yeast 74S mitochondrial ribosomes consist of a small (37S) and a large (54S) subunit. The 37S small subunit contains a 15S ribosomal RNA (15S mt-rRNA) and at least 32 different proteins. The 54S large subunit contains a 21S rRNA (21S mt-rRNA) and at least 45 different proteins. mS43 forms a dimer with mS42, building a large protuberance adjacent to the mRNA channel exit in the mt-SSU body.

It is found in the mitochondrion. Its function is as follows. Component of the mitochondrial ribosome (mitoribosome), a dedicated translation machinery responsible for the synthesis of mitochondrial genome-encoded proteins, including at least some of the essential transmembrane subunits of the mitochondrial respiratory chain. The mitoribosomes are attached to the mitochondrial inner membrane and translation products are cotranslationally integrated into the membrane. The polypeptide is Small ribosomal subunit protein mS42 (Schizosaccharomyces pombe (strain 972 / ATCC 24843) (Fission yeast)).